Here is a 564-residue protein sequence, read N- to C-terminus: Dihydropyrimidinase-related protein 5 (564 aa).

A phosphothreonine mark is found at Thr509 and Thr514. A phosphoserine mark is found at Ser532 and Ser538. Arg559 is subject to Omega-N-methylarginine.

Belongs to the metallo-dependent hydrolases superfamily. Hydantoinase/dihydropyrimidinase family. Homotetramer, and heterotetramer with other DPYS-like proteins. Interacts with DPYSL2, DPYSL3 and DPYSL4. Interacts with SEPTIN4 isoform 4. Interacts with MAP2 and TUBB3. In terms of tissue distribution, detected in brain.

It localises to the cytoplasm. Involved in the negative regulation of dendrite outgrowth. The sequence is that of Dihydropyrimidinase-related protein 5 (Dpysl5) from Mus musculus (Mouse).